A 106-amino-acid chain; its full sequence is uncharacterized protein (106 aa).

2 consecutive transmembrane segments (helical) span residues 25–45 (VMNV…IHYI) and 62–82 (ICFL…NFQG).

The protein localises to the membrane. This is an uncharacterized protein from Saccharomyces cerevisiae (strain ATCC 204508 / S288c) (Baker's yeast).